The sequence spans 230 residues: Large ribosomal subunit protein uL1 (230 aa).

Belongs to the universal ribosomal protein uL1 family. Part of the 50S ribosomal subunit.

In terms of biological role, binds directly to 23S rRNA. The L1 stalk is quite mobile in the ribosome, and is involved in E site tRNA release. Protein L1 is also a translational repressor protein, it controls the translation of the L11 operon by binding to its mRNA. The protein is Large ribosomal subunit protein uL1 of Lactobacillus acidophilus (strain ATCC 700396 / NCK56 / N2 / NCFM).